The following is a 473-amino-acid chain: Peptidoglycan DL-endopeptidase CwlO (473 aa).

The signal sequence occupies residues 1-30 (MRKSLITLGLASVIGTSSFLIPFTSKTASA). Disordered stretches follow at residues 31-52 (ETLD…SSIE), 79-98 (ALDT…KTKE), and 237-337 (EASE…GTVI). Basic and acidic residues predominate over residues 33–44 (LDEKKQKIESKQ). Residues 241-250 (LANQKANTEA) are compositionally biased toward polar residues. Composition is skewed to basic and acidic residues over residues 251 to 260 (EQARIKKEQE) and 267 to 277 (KKQEEAQKASD). Low complexity predominate over residues 291–337 (SSKASSSDDSSDNSSDNSSNGSSNSSSNGSSSKKSSGSNSNSGGTVI). The NlpC/P60 domain maps to 340-471 (SGGIEGAISV…AAFKGVVRRV (132 aa)). Cysteine 377 (nucleophile) is an active-site residue. The Proton acceptor role is filled by histidine 431. Asparagine 443 is an active-site residue.

It belongs to the peptidase C40 family. In terms of processing, identified in the extracellular proteome as a number of processing products of about 50 and 30 kDa.

The protein localises to the secreted. The protein resides in the cell wall. With respect to regulation, detected in exponentially growing cells, the 50 and 30 kDa processing products disappear upon entry into stationary phase with the concomitant appearance of a 20 kDa products. The 50 kDa form persists in the absence of extracellular proteases. The C-terminal part of CwlO shows a cell wall hydrolytic DL-endopeptidase activity. This Bacillus subtilis (strain 168) protein is Peptidoglycan DL-endopeptidase CwlO (cwlO).